We begin with the raw amino-acid sequence, 480 residues long: Sensor histidine kinase CusS (480 aa).

Topologically, residues 1-15 are cytoplasmic; that stretch reads MVSKPFQRPFSLATR. A helical transmembrane segment spans residues 16 to 36; that stretch reads LTFFISLATIAAFFAFAWIMI. Topologically, residues 37–186 are periplasmic; it reads HSVKVHFAEQ…LHYINDLMNK (150 aa). Residues 187-207 traverse the membrane as a helical segment; it reads LIMTASVISILIVFIVLLAVH. The region spanning 207–260 is the HAMP domain; it reads HKGHAPIRSVSRQIQNITSKDLDVRLDPQTVPIELEQLVLSFNHMIERIEDVFT. Residues 208 to 480 are Cytoplasmic-facing; sequence KGHAPIRSVS…GTRFVIILPA (273 aa). In terms of domain architecture, Histidine kinase spans 268–480; sequence DIAHEIRTPI…GTRFVIILPA (213 aa). Histidine 271 is modified (phosphohistidine; by autocatalysis).

Post-translationally, autophosphorylated.

It localises to the cell inner membrane. It catalyses the reaction ATP + protein L-histidine = ADP + protein N-phospho-L-histidine.. Its function is as follows. Member of the two-component regulatory system CusS/CusR involved in response to copper and silver. Acts as a copper/silver ion sensor. Activates CusR by phosphorylation. This is Sensor histidine kinase CusS (cusS) from Escherichia coli O6:H1 (strain CFT073 / ATCC 700928 / UPEC).